Reading from the N-terminus, the 1836-residue chain is Sodium channel protein type 4 subunit alpha (1836 aa).

The Cytoplasmic segment spans residues 1-131; the sequence is MARPSLCTLV…RGAIKVLIHA (131 aa). Basic and acidic residues predominate over residues 39 to 60; it reads LQRNKQMEIEEPERKPRSDLEA. Residues 39–63 are disordered; the sequence is LQRNKQMEIEEPERKPRSDLEAGKN. An I repeat occupies 113–454; the sequence is LLSPFSVVRR…VVAMAYAEQN (342 aa). Residues 132-150 traverse the membrane as a helical segment; it reads LFSMFIMITILTNCVFMTM. Topologically, residues 151-157 are extracellular; it reads SDPPPWS. A helical membrane pass occupies residues 158–178; the sequence is KNVEYTFTGIYTFESLIKILA. The Cytoplasmic segment spans residues 179-192; the sequence is RGFCVDDFTFLRDP. A helical membrane pass occupies residues 193–210; that stretch reads WNWLDFSVIMMAYLTEFV. Residues 211-216 are Extracellular-facing; the sequence is DLGNIS. The N-linked (GlcNAc...) asparagine glycan is linked to asparagine 214. The chain crosses the membrane as a helical span at residues 217–233; it reads ALRTFRVLRALKTITVI. Topologically, residues 234–252 are cytoplasmic; that stretch reads PGLKTIVGALIQSVKKLSD. A helical membrane pass occupies residues 253-272; that stretch reads VMILTVFCLSVFALVGLQLF. The Extracellular segment spans residues 273-391; the sequence is MGNLRQKCVR…PNYGYTSYDT (119 aa). A disulfide bond links cysteine 280 and cysteine 360. 8 N-linked (GlcNAc...) asparagine glycosylation sites follow: asparagine 288, asparagine 291, asparagine 297, asparagine 303, asparagine 315, asparagine 321, asparagine 333, and asparagine 362. The cysteines at positions 369 and 375 are disulfide-linked. The segment at residues 392 to 416 is an intramembrane region (pore-forming); the sequence is FSWAFLALFRLMTQDYWENLFQLTL. Over 417–423 the chain is Extracellular; that stretch reads RAAGKTY. A helical transmembrane segment spans residues 424–444; sequence MIFFVVIIFLGSFYLINLILA. The Cytoplasmic segment spans residues 445 to 578; that stretch reads VVAMAYAEQN…NIIHLIVMDP (134 aa). Residues 493 to 530 form a disordered region; the sequence is GGEADGDPAHGKDCNGSLDTSQGEKGAPRQSSSGDSGI. The span at 509-528 shows a compositional bias: polar residues; it reads SLDTSQGEKGAPRQSSSGDS. One copy of the II repeat lies at 560–832; it reads CCAPWLKFKN…QIAIGRIKLG (273 aa). Residues 579 to 597 traverse the membrane as a helical segment; that stretch reads FVDLGITICIVLNTLFMAM. Over 598 to 608 the chain is Extracellular; that stretch reads EHYPMTEHFDN. A helical transmembrane segment spans residues 609–628; sequence VLTVGNLVFTGIFTAEMVLK. Over 629-642 the chain is Cytoplasmic; the sequence is LIAMDPYEYFQQGW. A helical membrane pass occupies residues 643-662; sequence NIFDSIIVTLSLVELGLANV. Topologically, residues 663–664 are extracellular; the sequence is QG. A helical membrane pass occupies residues 665 to 682; sequence LSVLRSFRLLRVFKLAKS. Residues 683–698 lie on the Cytoplasmic side of the membrane; sequence WPTLNMLIKIIGNSVG. A helical membrane pass occupies residues 699–717; sequence ALGNLTLVLAIIVFIFAVV. Residues 718 to 746 are Extracellular-facing; it reads GMQLFGKSYKECVCKIALDCNLPRWHMHD. A disulfide bridge links cysteine 731 with cysteine 737. Residues 747 to 767 constitute an intramembrane region (pore-forming); it reads FFHSFLIVFRILCGEWIETMW. Residues 768–778 are Extracellular-facing; that stretch reads DCMEVAGQAMC. A disulfide bond links cysteine 769 and cysteine 778. A helical membrane pass occupies residues 779 to 797; the sequence is LTVFLMVMVIGNLVVLNLF. Residues 798–1032 are Cytoplasmic-facing; sequence LALLLSSFSA…ACFKIVEHNW (235 aa). Disordered stretches follow at residues 863–885 and 930–992; these read GAGEAGEAGETAPEDEKKEPPEE and ESDL…QPEE. Residues 876–885 are compositionally biased toward basic and acidic residues; that stretch reads EDEKKEPPEE. 2 stretches are compositionally biased toward acidic residues: residues 930–947 and 975–992; these read ESDLEMPTEEETDTFSEP and EDPEEQAEENPEGEQPEE. An III repeat occupies 1013–1326; sequence RGKKWWTLRR…KKYYNAMKKL (314 aa). Residues 1033 to 1050 form a helical membrane-spanning segment; sequence FETFIVFMILLSSGALAF. Residues 1051–1063 lie on the Extracellular side of the membrane; that stretch reads EDIYIEQRRVIRT. Residues 1064-1082 form a helical membrane-spanning segment; that stretch reads ILEYADKVFTYIFIMEMLL. Residues 1083-1096 lie on the Cytoplasmic side of the membrane; that stretch reads KWVAYGFKVYFTNA. The chain crosses the membrane as a helical span at residues 1097–1115; the sequence is WCWLDFLIVDVSIISLVAN. The Extracellular segment spans residues 1116-1123; that stretch reads WLGYSELG. A helical membrane pass occupies residues 1124–1142; sequence PIKSLRTLRALRPLRALSR. Over 1143-1159 the chain is Cytoplasmic; sequence FEGMRVVVNALLGAIPS. A helical membrane pass occupies residues 1160–1179; that stretch reads IMNVLLVCLIFWLIFSIMGV. At 1180–1230 the chain is on the extracellular side; it reads NLFAGKFYYCINTTTSERFDISEVNNKSECESLMHTGQVRWLNVKVNYDNV. Cysteine 1189 and cysteine 1209 are joined by a disulfide. 2 N-linked (GlcNAc...) asparagine glycosylation sites follow: asparagine 1191 and asparagine 1205. Residues 1231–1252 constitute an intramembrane region (pore-forming); that stretch reads GLGYLSLLQVATFKGWMDIMYA. The Extracellular segment spans residues 1253-1269; that stretch reads AVDSREKEEQPQYEVNL. Residues 1270-1291 traverse the membrane as a helical segment; the sequence is YMYLYFVIFIIFGSFFTLNLFI. The Cytoplasmic portion of the chain corresponds to 1292 to 1354; that stretch reads GVIIDNFNQQ…MVYDLVTKQA (63 aa). Residues 1310-1312 are important for rapid channel inactivation; that stretch reads IFM. An IV repeat occupies 1335 to 1633; that stretch reads IPRPQNKIQG…WEKFDPDATQ (299 aa). The helical transmembrane segment at 1355–1372 threads the bilayer; sequence FDITIMILICLNMVTMMV. Over 1373–1383 the chain is Extracellular; it reads ETDNQSQLKVD. Residues 1384–1402 traverse the membrane as a helical segment; it reads ILYNINMIFIIIFTGECVL. Topologically, residues 1403–1414 are cytoplasmic; the sequence is KMLALRQYYFTV. Residues 1415–1432 form a helical membrane-spanning segment; the sequence is GWNIFDFVVVILSIVGLA. Over 1433–1445 the chain is Extracellular; the sequence is LSDLIQKYFVSPT. A helical membrane pass occupies residues 1446-1462; sequence LFRVIRLARIGRVLRLI. Residues 1463 to 1481 are Cytoplasmic-facing; it reads RGAKGIRTLLFALMMSLPA. Residues 1482-1499 form a helical membrane-spanning segment; that stretch reads LFNIGLLLFLVMFIYSIF. Residues 1500 to 1521 are Extracellular-facing; sequence GMSNFAYVKKESGIDDMFNFET. Positions 1522-1544 form an intramembrane region, pore-forming; that stretch reads FGNSIICLFEITTSAGWDGLLNP. At 1545–1574 the chain is on the extracellular side; that stretch reads ILNSGPPDCDPNLENPGTSVKGDCGNPSIG. Cysteine 1553 and cysteine 1568 are disulfide-bonded. The helical transmembrane segment at 1575–1597 threads the bilayer; it reads ICFFCSYIIISFLIVVNMYIAII. At 1598–1836 the chain is on the cytoplasmic side; that stretch reads LENFNVATEE…VRPGVKESLV (239 aa). In terms of domain architecture, IQ spans 1727-1756; sequence EEVCAIKIQRAYRRHLLQRSMKQASYMYRH. The tract at residues 1778 to 1836 is disordered; it reads KMYGHENGNSSSPSPEEKGEAGDAGPTMGLMPISPSDTAWPPAPPPGQTVRPGVKESLV.

Belongs to the sodium channel (TC 1.A.1.10) family. Nav1.4/SCN4A subfamily. As to quaternary structure, the Nav1.4 voltage-gated sodium channel consists of an ion-conducting alpha subunit SCN4A which is functional on its own and a regulatory beta subunit SCN1B. SCN1B strongly enhances the presence of SCN4A at the cell surface. SCN1B is also required for rapid channel inactivation and recovery after inactivation. It prevents the decrease of channel activity in response to repetitive, high-frequency depolarizations. Interacts with the syntrophins SNTA1, SNTB1 and SNTB2 (via PDZ domain); probably links SCN4A to the actin cytoskeleton and the extracellular matrix via the dystrophin-associated protein complex and regulates its localization in muscle cells. Interacts with TMEM233; probable regulator of the channel.

Its subcellular location is the cell membrane. It catalyses the reaction Na(+)(in) = Na(+)(out). Its activity is regulated as follows. The channel is inhibited by tetrodotoxin and saxitoxin. Inhibited by the conotoxin GVIIJ. Functionally, pore-forming subunit of Nav1.4, a voltage-gated sodium (Nav) channel that directly mediates the depolarizing phase of action potentials in excitable membranes. Navs, also called VGSCs (voltage-gated sodium channels) or VDSCs (voltage-dependent sodium channels), operate by switching between closed and open conformations depending on the voltage difference across the membrane. In the open conformation they allow Na(+) ions to selectively pass through the pore, along their electrochemical gradient. The influx of Na+ ions provokes membrane depolarization, initiating the propagation of electrical signals throughout cells and tissues. Highly expressed in skeletal muscles, Nav1.4 generates the action potential crucial for muscle contraction. The chain is Sodium channel protein type 4 subunit alpha from Homo sapiens (Human).